The sequence spans 288 residues: Syntaxin PEP12 (288 aa).

Residues 1-268 lie on the Cytoplasmic side of the membrane; the sequence is MSEDEFFGGD…RYQKRTSRWR (268 aa). Phosphoserine occurs at positions 2 and 23. One can recognise a t-SNARE coiled-coil homology domain in the interval 195 to 257; the sequence is QNLIEQRDQE…QLASDELRKA (63 aa). The chain crosses the membrane as a helical; Anchor for type IV membrane protein span at residues 269–288; the sequence is VYLLIVLLVMLLFIFLIMKL.

It belongs to the syntaxin family. Post-translationally, ubiquitinated.

It localises to the membrane. Functionally, plays a role in the sorting and targeting of vacuolar proteases. The chain is Syntaxin PEP12 (PEP12) from Saccharomyces cerevisiae (strain ATCC 204508 / S288c) (Baker's yeast).